Consider the following 567-residue polypeptide: Hexose transporter HXT9 (567 aa).

Residues 1–16 (MSGVNNTSANDLSTTE) show a composition bias toward polar residues. The interval 1–45 (MSGVNNTSANDLSTTESNSNSVANAPSVKTEHNDSKNSLNLDATE) is disordered. The Cytoplasmic portion of the chain corresponds to 1–56 (MSGVNNTSANDLSTTESNSNSVANAPSVKTEHNDSKNSLNLDATEPPIDLPQKPLS). Low complexity predominate over residues 17 to 28 (SNSNSVANAPSV). The chain crosses the membrane as a helical span at residues 57 to 77 (AYTTVAILCLMIAFGGFIFGW). Residues 78-112 (DTGTISGFVNLSDFIRRFGQKNDKGTYYLSKVRMG) lie on the Extracellular side of the membrane. Asn-87 carries N-linked (GlcNAc...) asparagine glycosylation. Residues 113 to 133 (LIVSIFNIGCAIGGIVLSKVG) traverse the membrane as a helical segment. The Cytoplasmic segment spans residues 134–139 (DIYGRR). A helical transmembrane segment spans residues 140–160 (IGLITVTAIYVVGILIQITSI). The Extracellular segment spans residues 161–170 (NKWYQYFIGR). Residues 171 to 191 (IISGLGVGGIAVLSPMLISEV) traverse the membrane as a helical segment. Topologically, residues 192-197 (APKQIR) are cytoplasmic. A helical transmembrane segment spans residues 198 to 218 (GTLVQLYQLMCTMGIFLGYCT). The Extracellular segment spans residues 219-232 (NYGTKNYHNATQWR). Asn-227 is a glycosylation site (N-linked (GlcNAc...) asparagine). A helical membrane pass occupies residues 233 to 253 (VGLGLCFAWTTFMVSGMMFVP). The Cytoplasmic segment spans residues 254-336 (ESPRYLIEVG…IQSLQQLTGD (83 aa)). A helical membrane pass occupies residues 337–353 (NYFFYYGTTIFKSVGLK). Topologically, residues 354-359 (DSFQTS) are extracellular. Residues 360 to 377 (IIIGVVNFFSSFIAVYTI) form a helical membrane-spanning segment. Residues 378-384 (ERFGRRT) are Cytoplasmic-facing. The helical transmembrane segment at 385 to 405 (CLLWGAASMLCCFAVFASVGV) threads the bilayer. Residues 406–429 (TKLWPQGSSHQDITSQGAGNCMIV) are Extracellular-facing. The helical transmembrane segment at 430–450 (FTMFFIFSFATTWAGGCYVIV) threads the bilayer. Over 451–467 (SETFPLRVKSRGMAIAT) the chain is Cytoplasmic. A helical transmembrane segment spans residues 468 to 488 (AANWMWGFLISFFTPFITGAI). A topological domain (extracellular) is located at residue Asn-489. Residues 490-510 (FYYGYVFLGCLVFAYFYVFFF) traverse the membrane as a helical segment. Over 511–567 (VPETKGLTLEEVNTMWLEGVPAWKSASWVPPERRTADYDADAIDHDDRPIYKRFFSS) the chain is Cytoplasmic.

It belongs to the major facilitator superfamily. Sugar transporter (TC 2.A.1.1) family.

It localises to the membrane. Functionally, probable glucose transporter. The protein is Hexose transporter HXT9 (HXT9) of Saccharomyces cerevisiae (strain ATCC 204508 / S288c) (Baker's yeast).